Reading from the N-terminus, the 127-residue chain is uncharacterized protein (127 aa).

Residues 1 to 17 show a composition bias toward polar residues; the sequence is MQGSVQIQKGNISSSYT. Residues 1–36 are disordered; sequence MQGSVQIQKGNISSSYTPEKHPSHPTSANGSMSPKR.

This is an uncharacterized protein from Treponema pallidum (strain Nichols).